The sequence spans 85 residues: Small ribosomal subunit protein bS18c (85 aa).

It belongs to the bacterial ribosomal protein bS18 family. In terms of assembly, part of the 30S ribosomal subunit.

It localises to the plastid. The protein resides in the chloroplast. This Zygnema circumcarinatum (Green alga) protein is Small ribosomal subunit protein bS18c.